The primary structure comprises 790 residues: Accumulates dyads protein 3 (790 aa).

Residues 8–122 form a disordered region; the sequence is LNKPESLKEQ…NTLKSPNKFL (115 aa). Positions 39 to 49 are enriched in basic and acidic residues; the sequence is PESKPFRERRS. Polar residues-rich tracts occupy residues 50 to 78 and 89 to 108; these read QTWIDSEVPTSTEKSNVQESISSDIISKL and ESWAGSEASSPSGNISTLEN. 4 coiled-coil regions span residues 241–328, 361–430, 477–498, and 540–658; these read ISKE…REEK, LVSE…RLND, KNLENMEQYKQLKGKIELLEKN, and QQFR…LKKL.

In terms of assembly, interacts directly with SSP1. Probable component of a SPB complex composed of ADY3, SSP1, DON1, MPC54, SPO21/MPC70, NUD1 and CNM67. Post-translationally, phosphorylated.

Its subcellular location is the prospore membrane. It localises to the cytoplasm. It is found in the cytoskeleton. The protein localises to the microtubule organizing center. The protein resides in the spindle pole body. Functionally, involved in the pathway that organizes the prospore membrane (PSM) during sporulation. Mediates the assembly of the DON1 ring structure at the leading edge of PSM during meiosis II. May constitute a physical link between SSP1-containing PSM precursors and the spindle pole body (SPB) and may facilitate the recruitment of other factors that are required to promote spore wall formation. This Saccharomyces cerevisiae (strain ATCC 204508 / S288c) (Baker's yeast) protein is Accumulates dyads protein 3 (ADY3).